The primary structure comprises 150 residues: MSTIMVLNGPNLNLLGTREPATYGYETLADVEVMCREAALSLGHEVECHQSNHEGVLIDLIHEAGRRIKAGEVLGVVFNPGAYTHTSVALHDAIKGAEVPVIEVHISNVHAREAFRHHSYISPAAAGIVVGMGVQGYVLGIQGLVHKLKA.

Catalysis depends on Tyr-23, which acts as the Proton acceptor. Residues Asn-79, His-85, and Asp-92 each coordinate substrate. His-105 functions as the Proton donor in the catalytic mechanism. Substrate is bound by residues 106–107 and Arg-116; that span reads IS.

This sequence belongs to the type-II 3-dehydroquinase family. As to quaternary structure, homododecamer.

The enzyme catalyses 3-dehydroquinate = 3-dehydroshikimate + H2O. It participates in metabolic intermediate biosynthesis; chorismate biosynthesis; chorismate from D-erythrose 4-phosphate and phosphoenolpyruvate: step 3/7. Catalyzes a trans-dehydration via an enolate intermediate. In Marinomonas sp. (strain MWYL1), this protein is 3-dehydroquinate dehydratase.